The sequence spans 338 residues: Ketol-acid reductoisomerase (NADP(+)) (338 aa).

Positions 1 to 181 (MKVYYENDAD…GGTKAGVIET (181 aa)) constitute a KARI N-terminal Rossmann domain. NADP(+) is bound by residues 24–27 (FGSQ), K47, S50, S52, and 82–85 (DQVQ). H107 is a catalytic residue. G133 provides a ligand contact to NADP(+). In terms of domain architecture, KARI C-terminal knotted spans 182 to 327 (NFKDETETDL…EKLRGMMSWL (146 aa)). Mg(2+)-binding residues include D190, E194, E226, and E230. S251 is a binding site for substrate.

This sequence belongs to the ketol-acid reductoisomerase family. It depends on Mg(2+) as a cofactor.

The catalysed reaction is (2R)-2,3-dihydroxy-3-methylbutanoate + NADP(+) = (2S)-2-acetolactate + NADPH + H(+). It carries out the reaction (2R,3R)-2,3-dihydroxy-3-methylpentanoate + NADP(+) = (S)-2-ethyl-2-hydroxy-3-oxobutanoate + NADPH + H(+). The protein operates within amino-acid biosynthesis; L-isoleucine biosynthesis; L-isoleucine from 2-oxobutanoate: step 2/4. It functions in the pathway amino-acid biosynthesis; L-valine biosynthesis; L-valine from pyruvate: step 2/4. Involved in the biosynthesis of branched-chain amino acids (BCAA). Catalyzes an alkyl-migration followed by a ketol-acid reduction of (S)-2-acetolactate (S2AL) to yield (R)-2,3-dihydroxy-isovalerate. In the isomerase reaction, S2AL is rearranged via a Mg-dependent methyl migration to produce 3-hydroxy-3-methyl-2-ketobutyrate (HMKB). In the reductase reaction, this 2-ketoacid undergoes a metal-dependent reduction by NADPH to yield (R)-2,3-dihydroxy-isovalerate. The polypeptide is Ketol-acid reductoisomerase (NADP(+)) (Chloroherpeton thalassium (strain ATCC 35110 / GB-78)).